A 165-amino-acid chain; its full sequence is Nucleotide-binding protein MXAN_1478 (165 aa).

The protein belongs to the YajQ family.

Nucleotide-binding protein. This chain is Nucleotide-binding protein MXAN_1478, found in Myxococcus xanthus (strain DK1622).